A 498-amino-acid chain; its full sequence is Probable cytosol aminopeptidase (498 aa).

Residues Lys264 and Asp269 each coordinate Mn(2+). Lys276 is a catalytic residue. Mn(2+) contacts are provided by Asp287, Asp346, and Glu348. The active site involves Arg350.

It belongs to the peptidase M17 family. Requires Mn(2+) as cofactor.

The protein localises to the cytoplasm. It carries out the reaction Release of an N-terminal amino acid, Xaa-|-Yaa-, in which Xaa is preferably Leu, but may be other amino acids including Pro although not Arg or Lys, and Yaa may be Pro. Amino acid amides and methyl esters are also readily hydrolyzed, but rates on arylamides are exceedingly low.. The catalysed reaction is Release of an N-terminal amino acid, preferentially leucine, but not glutamic or aspartic acids.. Presumably involved in the processing and regular turnover of intracellular proteins. Catalyzes the removal of unsubstituted N-terminal amino acids from various peptides. In Xanthobacter autotrophicus (strain ATCC BAA-1158 / Py2), this protein is Probable cytosol aminopeptidase.